A 401-amino-acid chain; its full sequence is Ascaroside receptor GPR3 (401 aa).

The Extracellular portion of the chain corresponds to 1–16; it reads MQPFGDAWSQRHLAGV. The chain crosses the membrane as a helical span at residues 17 to 37; it reads VLAGSVLSIVGSLYMILGFFF. The Cytoplasmic portion of the chain corresponds to 38 to 47; it reads LRECRSFRHK. A helical transmembrane segment spans residues 48–68; the sequence is LILGLAVSDLLLALNFFIPSL. The Extracellular portion of the chain corresponds to 69-93; the sequence is SMVTGREISSPWNEGFCSANGFLMQ. Cysteines 85 and 159 form a disulfide. The chain crosses the membrane as a helical span at residues 94-114; sequence LFFAQIDVWQISIALITLLML. Topologically, residues 115–128 are cytoplasmic; it reads SGPSMVLKWIRENV. A helical transmembrane segment spans residues 129-149; sequence WAVWLFPWLVSLIAAFFAFGF. Residues 150-175 are Extracellular-facing; that stretch reads WDYANVGGFCWLGSRNIRLYFNYIPR. The helical transmembrane segment at 176 to 196 threads the bilayer; it reads WIIILVCLVIYIAVYRLILHA. The Cytoplasmic portion of the chain corresponds to 197 to 294; the sequence is RRRANIQKTY…QKQVRKIAIQ (98 aa). The interval 206–259 is disordered; that stretch reads YRGRASDRAPPQPVTTTAPATNPESEKVNPDEISSGNGSSSLDTSRSGSSTGFT. Over residues 239–257 the composition is skewed to low complexity; it reads SSGNGSSSLDTSRSGSSTG. A helical transmembrane segment spans residues 295–315; the sequence is MISYPLAYAVLWAIPTIVMII. The Extracellular portion of the chain corresponds to 316-321; sequence QVARGG. A helical transmembrane segment spans residues 322–342; the sequence is EGVSIHVEGLAKMLLVFNGFV. Residues 343 to 401 lie on the Cytoplasmic side of the membrane; it reads DAHVYGFNERTAMGWRQRIRPAAQEDDEEAAGTSGGVHEVVSRPEPTLKNPNVWQQNMV. A disordered region spans residues 362–401; sequence RPAAQEDDEEAAGTSGGVHEVVSRPEPTLKNPNVWQQNMV. A compositionally biased stretch (polar residues) spans 391–401; sequence KNPNVWQQNMV.

It belongs to the G-protein coupled receptor 1 family. Interacts with ascaroside receptor GPR2; may form a functional heterodimer. Interacts with guanine nucleotide-binding protein alpha GPA2; to activate adenylate cyclase and positively regulate nematode trap formation.

It localises to the cell membrane. Functionally, g protein-coupled receptor that senses nematode ascaroside pheromones and signals via adenylate cyclase to positively regulate trap formation for nematode capture. This Arthrobotrys oligospora (strain ATCC 24927 / CBS 115.81 / DSM 1491) (Nematode-trapping fungus) protein is Ascaroside receptor GPR3.